Here is a 103-residue protein sequence, read N- to C-terminus: Phosphoribosyl-ATP pyrophosphatase (103 aa).

Residues Leu-84 to Leu-103 are disordered.

This sequence belongs to the PRA-PH family.

Its subcellular location is the cytoplasm. It catalyses the reaction 1-(5-phospho-beta-D-ribosyl)-ATP + H2O = 1-(5-phospho-beta-D-ribosyl)-5'-AMP + diphosphate + H(+). It participates in amino-acid biosynthesis; L-histidine biosynthesis; L-histidine from 5-phospho-alpha-D-ribose 1-diphosphate: step 2/9. This chain is Phosphoribosyl-ATP pyrophosphatase (hisE), found in Listeria innocua serovar 6a (strain ATCC BAA-680 / CLIP 11262).